The chain runs to 100 residues: Small ribosomal subunit protein uS14c (100 aa).

This sequence belongs to the universal ribosomal protein uS14 family. Part of the 30S ribosomal subunit.

It localises to the plastid. In terms of biological role, binds 16S rRNA, required for the assembly of 30S particles. The protein is Small ribosomal subunit protein uS14c of Epifagus virginiana (Beechdrops).